Consider the following 436-residue polypeptide: 3-ketoacyl-CoA thiolase (436 aa).

Cysteine 99 acts as the Acyl-thioester intermediate in catalysis. Active-site proton acceptor residues include histidine 392 and cysteine 422.

It belongs to the thiolase-like superfamily. Thiolase family. In terms of assembly, heterotetramer of two alpha chains (FadJ) and two beta chains (FadI).

It is found in the cytoplasm. The enzyme catalyses an acyl-CoA + acetyl-CoA = a 3-oxoacyl-CoA + CoA. It participates in lipid metabolism; fatty acid beta-oxidation. In terms of biological role, catalyzes the final step of fatty acid oxidation in which acetyl-CoA is released and the CoA ester of a fatty acid two carbons shorter is formed. The sequence is that of 3-ketoacyl-CoA thiolase from Shewanella pealeana (strain ATCC 700345 / ANG-SQ1).